We begin with the raw amino-acid sequence, 344 residues long: Lysophosphatidic acid receptor 6 (344 aa).

Over 1-19 the chain is Extracellular; it reads MVSVNSSHCFYNDSFKYTL. N5 is a glycosylation site (N-linked (GlcNAc...) asparagine). A helical membrane pass occupies residues 20 to 46; the sequence is YGCMFSMVFVLGLISNCVAIYIFICVL. The Cytoplasmic portion of the chain corresponds to 47–55; it reads KVRNETTTY. A helical membrane pass occupies residues 56–79; that stretch reads MINLAMSDLLFVFTLPFRIFYFTT. At 80 to 92 the chain is on the extracellular side; the sequence is RNWPFGDLLCKIS. A disulfide bridge connects residues C89 and C168. Residues 93–112 form a helical membrane-spanning segment; sequence VMLFYTNMYGSILFLTCISV. Over 113–133 the chain is Cytoplasmic; the sequence is DRFLAIVYPFKSKTLRTKRNA. Residues 134–154 traverse the membrane as a helical segment; that stretch reads KIVCTGVWLTVIGGSAPAVFV. Topologically, residues 155 to 181 are extracellular; the sequence is QSTHSQGNNASEACFENFPEATWKTYL. The chain crosses the membrane as a helical span at residues 182–209; the sequence is SRIVIFIEIVGFFIPLILNVTCSSMVLK. The Cytoplasmic portion of the chain corresponds to 210–227; that stretch reads TLTKPVTLSRSKINKTKV. Residues 228 to 253 traverse the membrane as a helical segment; it reads LKMIFVHLIIFCFCFVPYNINLILYS. Topologically, residues 254 to 272 are extracellular; sequence LVRTQTFVNCSVVAAVRTM. The chain crosses the membrane as a helical span at residues 273 to 292; that stretch reads YPITLCIAVSNCCFDPIVYY. Residue C284 is the site of S-palmitoyl cysteine attachment. The Cytoplasmic segment spans residues 293–344; sequence FTSDTIQNSIKMKNWSVRRSDFRFSEVHGAENFIQHNLQTLKSKIFDNESAA.

It belongs to the G-protein coupled receptor 1 family. As to expression, expressed ubiquitously, including in skin and hair follicle cells. Detected in both Henle's and Huxley's layers of the inner root sheath of the hair follicle and in suprabasal layers of the epidermis (at protein level). Expressed at low levels in peripheral blood leukocytes.

It is found in the cell membrane. In terms of biological role, binds to oleoyl-L-alpha-lysophosphatidic acid (LPA). Intracellular cAMP is involved in the receptor activation. Important for the maintenance of hair growth and texture. This Homo sapiens (Human) protein is Lysophosphatidic acid receptor 6 (LPAR6).